The chain runs to 441 residues: Transcriptional regulatory protein ZraR (441 aa).

In terms of domain architecture, Response regulatory spans 7 to 121 (DILVVDDDVS…RLQETLEKAL (115 aa)). Asp-56 is subject to 4-aspartylphosphate. One can recognise a Sigma-54 factor interaction domain in the interval 141–370 (MIGSSPAMQH…LENAIERAVV (230 aa)). ATP-binding residues include Gly-172, Thr-173, Arg-329, and Arg-359. The segment at residues 421–440 (KTEAARQLGITRKTLLAKLS) is a DNA-binding region (H-T-H motif).

As to quaternary structure, forms homohexamers in the crystal structure. However, the dimerization interface between DNA-binding domains observed in the crystal structure suggests that dodecamers, rather than hexamers, might be the functionally important oligomer. Phosphorylated by ZraS.

It localises to the cytoplasm. With respect to regulation, activity of the ZraS/ZraR two-component system is repressed by the zinc-bound form of ZraP, which probably interacts with the periplasmic region of ZraS. Functionally, part of the Zra signaling pathway, an envelope stress response (ESR) system composed of the periplasmic accessory protein ZraP, the histidine kinase ZraS and the transcriptional regulator ZraR. The ZraPSR system contributes to antibiotic resistance and is important for membrane integrity in the presence of membrane-targeting biocides. ZraR is a member of the two-component regulatory system ZraS/ZraR. When activated by ZraS, acts in conjunction with sigma-54 to regulate the expression of zraP in the presence of high Zn(2+) or Pb(2+) concentrations. Also positively autoregulates the expression of the zraSR operon. The chain is Transcriptional regulatory protein ZraR from Salmonella typhimurium (strain LT2 / SGSC1412 / ATCC 700720).